A 417-amino-acid chain; its full sequence is NADH-quinone oxidoreductase subunit D (417 aa).

This sequence belongs to the complex I 49 kDa subunit family. In terms of assembly, NDH-1 is composed of 14 different subunits. Subunits NuoB, C, D, E, F, and G constitute the peripheral sector of the complex.

It is found in the cell inner membrane. It catalyses the reaction a quinone + NADH + 5 H(+)(in) = a quinol + NAD(+) + 4 H(+)(out). In terms of biological role, NDH-1 shuttles electrons from NADH, via FMN and iron-sulfur (Fe-S) centers, to quinones in the respiratory chain. The immediate electron acceptor for the enzyme in this species is believed to be ubiquinone. Couples the redox reaction to proton translocation (for every two electrons transferred, four hydrogen ions are translocated across the cytoplasmic membrane), and thus conserves the redox energy in a proton gradient. This chain is NADH-quinone oxidoreductase subunit D, found in Acidithiobacillus ferrooxidans (strain ATCC 53993 / BNL-5-31) (Leptospirillum ferrooxidans (ATCC 53993)).